The following is a 250-amino-acid chain: Homeobox protein DLL-1 (250 aa).

2 disordered regions span residues 40–66 and 84–106; these read YPSL…SGSN and SPYL…PDQQ. A compositionally biased stretch (polar residues) spans 84 to 98; sequence SPYLQSCNSNTTTQS. A DNA-binding region (homeobox) is located at residues 125 to 184; the sequence is IRKPRTIYSSLQLQALNHRFQQTQYLALPERAELAASLGVTQTQVKIWFQNKRSKYKKLI.

Belongs to the distal-less homeobox family.

It is found in the nucleus. The sequence is that of Homeobox protein DLL-1 (dll1) from Xenopus laevis (African clawed frog).